The sequence spans 1003 residues: Alpha-1,4 glucan phosphorylase L isozyme, chloroplastic/amyloplastic (1003 aa).

Residues 1–64 (MASMTMRFHP…RRRSAFSVKC (64 aa)) constitute a chloroplast transit peptide. Disordered regions lie at residues 71 to 91 (KQKVKDQEVQQEAKTSPSSFA) and 526 to 593 (SSEE…KKLP). Positions 537-553 (GEEEETSKEGGEEEEEK) are enriched in acidic residues. Over residues 569-580 (EVEKAIAEKDGT) the composition is skewed to basic and acidic residues. Residue lysine 849 is modified to N6-(pyridoxal phosphate)lysine.

It belongs to the glycogen phosphorylase family. Pyridoxal 5'-phosphate serves as cofactor. As to expression, found predominantly in cotyledons and early seed coat.

The protein resides in the plastid. The protein localises to the chloroplast. It localises to the amyloplast. The enzyme catalyses [(1-&gt;4)-alpha-D-glucosyl](n) + phosphate = [(1-&gt;4)-alpha-D-glucosyl](n-1) + alpha-D-glucose 1-phosphate. Its function is as follows. Phosphorylase is an important allosteric enzyme in carbohydrate metabolism. Enzymes from different sources differ in their regulatory mechanisms and in their natural substrates. However, all known phosphorylases share catalytic and structural properties. Functionally, the L isoform exhibits higher affinity for unbranched substrates such as glucan-like amylose and maltodextrin. The polypeptide is Alpha-1,4 glucan phosphorylase L isozyme, chloroplastic/amyloplastic (PHO1) (Vicia faba (Broad bean)).